Consider the following 179-residue polypeptide: Large ribosomal subunit protein uL5 (179 aa).

It belongs to the universal ribosomal protein uL5 family. In terms of assembly, part of the 50S ribosomal subunit; part of the 5S rRNA/L5/L18/L25 subcomplex. Contacts the 5S rRNA and the P site tRNA. Forms a bridge to the 30S subunit in the 70S ribosome.

In terms of biological role, this is one of the proteins that bind and probably mediate the attachment of the 5S RNA into the large ribosomal subunit, where it forms part of the central protuberance. In the 70S ribosome it contacts protein S13 of the 30S subunit (bridge B1b), connecting the 2 subunits; this bridge is implicated in subunit movement. Contacts the P site tRNA; the 5S rRNA and some of its associated proteins might help stabilize positioning of ribosome-bound tRNAs. This Geobacillus thermodenitrificans (strain NG80-2) protein is Large ribosomal subunit protein uL5.